The chain runs to 349 residues: Flap endonuclease 1 (349 aa).

The segment at 1-102 (MGVTELGKLI…AEIEARRRVK (102 aa)) is N-domain. The Mg(2+) site is built by aspartate 31, aspartate 84, glutamate 156, glutamate 158, aspartate 177, aspartate 179, and aspartate 239. An I-domain region spans residues 120 to 261 (DVAKYMKRVI…KALKLVLEFG (142 aa)).

This sequence belongs to the XPG/RAD2 endonuclease family. FEN1 subfamily. As to quaternary structure, interacts with PCNA. PCNA stimulates the nuclease activity without altering cleavage specificity. It depends on Mg(2+) as a cofactor.

Structure-specific nuclease with 5'-flap endonuclease and 5'-3' exonuclease activities involved in DNA replication and repair. During DNA replication, cleaves the 5'-overhanging flap structure that is generated by displacement synthesis when DNA polymerase encounters the 5'-end of a downstream Okazaki fragment. Binds the unpaired 3'-DNA end and kinks the DNA to facilitate 5' cleavage specificity. Cleaves one nucleotide into the double-stranded DNA from the junction in flap DNA, leaving a nick for ligation. Also involved in the base excision repair (BER) pathway. Acts as a genome stabilization factor that prevents flaps from equilibrating into structures that lead to duplications and deletions. Also possesses 5'-3' exonuclease activity on nicked or gapped double-stranded DNA. The chain is Flap endonuclease 1 from Pyrobaculum neutrophilum (strain DSM 2338 / JCM 9278 / NBRC 100436 / V24Sta) (Thermoproteus neutrophilus).